The following is a 459-amino-acid chain: MSLRIYNTLSRAIEPLIPLQPGHVRMYVCGMTVYDLCHLGHARAMVAFDVVQRWLKVSGLRVTYVRNVTDIDDKIIKRALENGESIRALTERMVDALHQDADALGIERPTHEPRATEFVPQMLSLIGRLEQKGLAYQAVNGDVNYAVRKFPGYGKLSGKSLDELRAGERVAVADGKDDPLDFVLWKTAKPNEPLDAKWDSVYGQGRPGWHIECSAMCGQMLGETVDIHGGGADLQFPHHENEIAQSEGATGKPLASIWMHNGFVTRDNEKMSKSLGNFFTIRDILARYDAETTRFFIIRAHYRSALNHSDAHLDDARNSLKRLYTALDLVAPEPLLEIDWRQPFAARFKAAMDEDFGTPEAVAVMFELATEVNKTRDPKLAGLLKALGACLGLLQGDPKVFLQAGATLDAASIAALIAQRTAAKAAKNFAEADRIRQDLLARGIVLKDSAAGTVWEVVA.

A Zn(2+)-binding site is contributed by cysteine 29. The 'HIGH' region motif lies at 31–41 (MTVYDLCHLGH). Residues cysteine 213, histidine 238, and glutamate 242 each coordinate Zn(2+). Positions 270-274 (KMSKS) match the 'KMSKS' region motif. ATP is bound at residue lysine 273.

It belongs to the class-I aminoacyl-tRNA synthetase family. In terms of assembly, monomer. Zn(2+) serves as cofactor.

It localises to the cytoplasm. It carries out the reaction tRNA(Cys) + L-cysteine + ATP = L-cysteinyl-tRNA(Cys) + AMP + diphosphate. This Albidiferax ferrireducens (strain ATCC BAA-621 / DSM 15236 / T118) (Rhodoferax ferrireducens) protein is Cysteine--tRNA ligase.